The primary structure comprises 271 residues: Aquaporin-1 (271 aa).

The Cytoplasmic portion of the chain corresponds to 1-11 (MASEFKKKLFW). The chain crosses the membrane as a helical span at residues 12 to 29 (RAVVAEFLAMILFVFISI). The Extracellular portion of the chain corresponds to 30 to 48 (GSALGFNYPVRNNQTAGAA). Residue Asn42 is glycosylated (N-linked (GlcNAc...) asparagine). The chain crosses the membrane as a helical span at residues 49-67 (QDNVKVSLAFGLSIATLAQ). Residues 68–70 (SVG) are Cytoplasmic-facing. The stretch at 71-84 (HISGAHLNPAVTLG) is an intramembrane region. The short motif at 78-80 (NPA) is the NPA 1 element. The Cytoplasmic portion of the chain corresponds to 85–92 (LLLSCQIS). Residues 93-111 (ILRAVMYIIAQCVGAIVAT) form a helical membrane-spanning segment. Over 112–135 (AILSGITSSLPDNSLGRNELAPGV) the chain is Extracellular. The chain crosses the membrane as a helical span at residues 136-155 (NSGQGLGIEIIGTLQLVLCV). Residues 156–165 (LATTDRRRRD) lie on the Cytoplasmic side of the membrane. Residues 166–183 (LGGSGPLAIGLSVALGHL) form a helical membrane-spanning segment. Topologically, residues 184-188 (LAIDY) are extracellular. Residues 189–201 (TGCGINPARSFGS) lie within the membrane without spanning it. The NPA 2 signature appears at 194–196 (NPA). Over 202-208 (SVITHNF) the chain is Extracellular. A helical transmembrane segment spans residues 209–226 (KDHWIFWVGPFIGGALAV). Residues 227 to 271 (LIYDFILAPRSSDLTDRVKVWTSGQVEEYELDGDDINSRVEMKPK) lie on the Cytoplasmic side of the membrane. Ser249 is subject to Phosphoserine. The residue at position 255 (Tyr255) is a Phosphotyrosine. Ser264 carries the phosphoserine modification.

This sequence belongs to the MIP/aquaporin (TC 1.A.8) family. As to quaternary structure, homotetramer; each monomer provides an independent water pore. Component of the ankyrin-1 complex in the erythrocyte, composed of ANK1, RHCE, RHAG, SLC4A1, EPB42, GYPA, GYPB and AQP1. Interacts with EPHB2; involved in endolymph production in the inner ear. Identified in a complex with STOM. Interacts (via the N-terminal) with ANK1 (via ANK 1-5 repeats). Interacts (via the C-terminal) with EPB42.

It localises to the cell membrane. The catalysed reaction is H2O(in) = H2O(out). The enzyme catalyses nitric oxide(out) = nitric oxide(in). It carries out the reaction CO2(out) = CO2(in). It catalyses the reaction glycerol(in) = glycerol(out). The catalysed reaction is H2O2(out) = H2O2(in). The enzyme catalyses K(+)(in) = K(+)(out). It carries out the reaction Na(+)(in) = Na(+)(out). Its function is as follows. Forms a water channel that facilitates the transport of water across cell membranes, playing a crucial role in water homeostasis in various tissues. Could also be permeable to small solutes including hydrogen peroxide, glycerol and gases such as amonnia (NH3), nitric oxide (NO) and carbon dioxide (CO2). Recruited to the ankyrin-1 complex, a multiprotein complex of the erythrocyte membrane, it could be part of a CO2 metabolon, linking facilitated diffusion of CO2 across the membrane, anion exchange of Cl(-)/HCO3(-) and interconversion of dissolved CO2 and carbonic acid in the cytosol. In vitro, it shows non-selective gated cation channel activity and may be permeable to cations like K(+) and Na(+) in vivo. The polypeptide is Aquaporin-1 (Canis lupus familiaris (Dog)).